We begin with the raw amino-acid sequence, 491 residues long: Eupatolide synthase (491 aa).

Residues 7–27 (LPSWLLPAVVILTISCILMLW) form a helical; Signal-anchor for type II membrane protein membrane-spanning segment. Residue cysteine 430 coordinates heme.

It belongs to the cytochrome P450 family. Requires heme as cofactor. Expressed in leaf primordia.

Its subcellular location is the membrane. The catalysed reaction is 8beta-hydroxygermacra-1(10),4,11(13)-trien-12-oate + reduced [NADPH--hemoprotein reductase] + O2 = eupatolide + oxidized [NADPH--hemoprotein reductase] + 2 H2O. Its pathway is secondary metabolite biosynthesis; terpenoid biosynthesis. Involved in the biosynthesis of germacrene-derived sesquiterpene lactones. Hydroxylates 8-beta-hydroxy-germacrene A acid to 6-alpha,8-beta-hydroxy-germacrene A acid, which, in turn, undergo spontaneous lactonization to become eupatolide. The sequence is that of Eupatolide synthase from Helianthus annuus (Common sunflower).